Consider the following 82-residue polypeptide: Acyl carrier protein (82 aa).

Residues 3–81 (LSREKVLESI…DAVDFIIAAK (79 aa)) form the Carrier domain. Serine 41 is subject to O-(pantetheine 4'-phosphoryl)serine.

Belongs to the acyl carrier protein (ACP) family. In terms of processing, 4'-phosphopantetheine is transferred from CoA to a specific serine of apo-ACP by AcpS. This modification is essential for activity because fatty acids are bound in thioester linkage to the sulfhydryl of the prosthetic group.

It localises to the cytoplasm. It functions in the pathway lipid metabolism; fatty acid biosynthesis. Functionally, carrier of the growing fatty acid chain in fatty acid biosynthesis. This is Acyl carrier protein from Tropheryma whipplei (strain Twist) (Whipple's bacillus).